The chain runs to 1086 residues: Auxin response factor 19 (1086 aa).

Positions phenylalanine 126–asparagine 228 form a DNA-binding region, TF-B3. The span at proline 454 to methionine 485 shows a compositional bias: polar residues. Disordered regions lie at residues proline 454–glutamine 504, glutamine 545–leucine 564, leucine 624–glutamine 647, and glutamine 659–glutamate 788. A compositionally biased stretch (low complexity) spans glutamine 486 to glutamine 504. Positions glutamine 659–leucine 697 are enriched in low complexity. Polar residues predominate over residues glycine 700 to methionine 710. Low complexity predominate over residues glutamine 711 to glutamine 724. The segment covering serine 747–asparagine 771 has biased composition (polar residues). A compositionally biased stretch (low complexity) spans glutamine 772 to serine 785. The PB1 domain maps to arginine 958–aspartate 1051.

Belongs to the ARF family. In terms of assembly, homodimers and heterodimers. Interacts with the auxin-responsive protein IAA1. Binds to JMJ30. Binds to ATXR2 in the nucleus.

The protein resides in the nucleus. In terms of biological role, auxin response factors (ARFs) are transcriptional factors that bind specifically to the DNA sequence 5'-TGTCTC-3' found in the auxin-responsive promoter elements (AuxREs). Could act as transcriptional activator or repressor. Formation of heterodimers with Aux/IAA proteins may alter their ability to modulate early auxin response genes expression. Involved in ethylene responses. Regulates lateral root formation through direct regulation of LBD16 and/or LBD29. Functionally redundant with ARF7. Involved in cellular dedifferentiation during callus formation on callus-inducing medium (CIM) and in an ATXR2-dependent manner. The sequence is that of Auxin response factor 19 from Arabidopsis thaliana (Mouse-ear cress).